Here is a 166-residue protein sequence, read N- to C-terminus: Large ribosomal subunit protein uL10 (166 aa).

It belongs to the universal ribosomal protein uL10 family. As to quaternary structure, part of the ribosomal stalk of the 50S ribosomal subunit. The N-terminus interacts with L11 and the large rRNA to form the base of the stalk. The C-terminus forms an elongated spine to which L12 dimers bind in a sequential fashion forming a multimeric L10(L12)X complex.

Its function is as follows. Forms part of the ribosomal stalk, playing a central role in the interaction of the ribosome with GTP-bound translation factors. In Pseudomonas syringae pv. tomato (strain ATCC BAA-871 / DC3000), this protein is Large ribosomal subunit protein uL10.